Here is a 398-residue protein sequence, read N- to C-terminus: Bifunctional enzyme IspD/IspF (398 aa).

The tract at residues 1-237 is 2-C-methyl-D-erythritol 4-phosphate cytidylyltransferase; the sequence is MSISIAAIIL…QKKMQMFPDI (237 aa). Residues 238–398 are 2-C-methyl-D-erythritol 2,4-cyclodiphosphate synthase; that stretch reads RVGNGYDVHS…SVLYPGEIPQ (161 aa). Asp244 and His246 together coordinate a divalent metal cation. Residues 244-246 and 270-271 contribute to the 4-CDP-2-C-methyl-D-erythritol 2-phosphate site; these read DVH and HS. His278 provides a ligand contact to a divalent metal cation. 4-CDP-2-C-methyl-D-erythritol 2-phosphate is bound by residues 292–294, 368–371, Phe375, and Arg378; these read DIG and TTNE.

In the N-terminal section; belongs to the IspD/TarI cytidylyltransferase family. IspD subfamily. The protein in the C-terminal section; belongs to the IspF family. It depends on a divalent metal cation as a cofactor.

It carries out the reaction 2-C-methyl-D-erythritol 4-phosphate + CTP + H(+) = 4-CDP-2-C-methyl-D-erythritol + diphosphate. The catalysed reaction is 4-CDP-2-C-methyl-D-erythritol 2-phosphate = 2-C-methyl-D-erythritol 2,4-cyclic diphosphate + CMP. It participates in isoprenoid biosynthesis; isopentenyl diphosphate biosynthesis via DXP pathway; isopentenyl diphosphate from 1-deoxy-D-xylulose 5-phosphate: step 2/6. It functions in the pathway isoprenoid biosynthesis; isopentenyl diphosphate biosynthesis via DXP pathway; isopentenyl diphosphate from 1-deoxy-D-xylulose 5-phosphate: step 4/6. Functionally, bifunctional enzyme that catalyzes the formation of 4-diphosphocytidyl-2-C-methyl-D-erythritol from CTP and 2-C-methyl-D-erythritol 4-phosphate (MEP) (IspD), and catalyzes the conversion of 4-diphosphocytidyl-2-C-methyl-D-erythritol 2-phosphate (CDP-ME2P) to 2-C-methyl-D-erythritol 2,4-cyclodiphosphate (ME-CPP) with a corresponding release of cytidine 5-monophosphate (CMP) (IspF). The chain is Bifunctional enzyme IspD/IspF from Bartonella tribocorum (strain CIP 105476 / IBS 506).